The following is a 129-amino-acid chain: Small ribosomal subunit protein uS11 (129 aa).

The protein belongs to the universal ribosomal protein uS11 family. In terms of assembly, part of the 30S ribosomal subunit. Interacts with proteins S7 and S18. Binds to IF-3.

In terms of biological role, located on the platform of the 30S subunit, it bridges several disparate RNA helices of the 16S rRNA. Forms part of the Shine-Dalgarno cleft in the 70S ribosome. The protein is Small ribosomal subunit protein uS11 of Hahella chejuensis (strain KCTC 2396).